Reading from the N-terminus, the 355-residue chain is Putative inositol monophosphatase 3 (355 aa).

A helical transmembrane segment spans residues 16–36 (LPATIVAILLTFVLVYFLNFH). The Mg(2+) site is built by E127, D167, L169, D170, and D292. Residue E127 coordinates substrate. Substrate-binding positions include 169 to 172 (LDAT) and D292.

It belongs to the inositol monophosphatase superfamily. It depends on Mg(2+) as a cofactor.

It is found in the membrane. It carries out the reaction a myo-inositol phosphate + H2O = myo-inositol + phosphate. Its pathway is polyol metabolism; myo-inositol biosynthesis; myo-inositol from D-glucose 6-phosphate: step 2/2. The sequence is that of Putative inositol monophosphatase 3 from Drosophila melanogaster (Fruit fly).